We begin with the raw amino-acid sequence, 439 residues long: UDP-N-acetylmuramoylalanine--D-glutamate ligase (439 aa).

112–118 lines the ATP pocket; the sequence is GSNGKST.

This sequence belongs to the MurCDEF family.

It localises to the cytoplasm. It catalyses the reaction UDP-N-acetyl-alpha-D-muramoyl-L-alanine + D-glutamate + ATP = UDP-N-acetyl-alpha-D-muramoyl-L-alanyl-D-glutamate + ADP + phosphate + H(+). The protein operates within cell wall biogenesis; peptidoglycan biosynthesis. Its function is as follows. Cell wall formation. Catalyzes the addition of glutamate to the nucleotide precursor UDP-N-acetylmuramoyl-L-alanine (UMA). This is UDP-N-acetylmuramoylalanine--D-glutamate ligase from Mannheimia succiniciproducens (strain KCTC 0769BP / MBEL55E).